The sequence spans 536 residues: Phosphoenolpyruvate carboxykinase (ATP) (536 aa).

The substrate site is built by Arg61, Tyr195, and Lys201. ATP is bound by residues Lys201, His220, and 236–244 (GLSGTGKTT). Mn(2+) is bound by residues Lys201 and His220. Residue Asp257 coordinates Mn(2+). Glu285, Arg322, and Thr447 together coordinate ATP. Arg322 provides a ligand contact to substrate.

It belongs to the phosphoenolpyruvate carboxykinase (ATP) family. Mn(2+) is required as a cofactor.

The protein localises to the cytoplasm. The enzyme catalyses oxaloacetate + ATP = phosphoenolpyruvate + ADP + CO2. It functions in the pathway carbohydrate biosynthesis; gluconeogenesis. Involved in the gluconeogenesis. Catalyzes the conversion of oxaloacetate (OAA) to phosphoenolpyruvate (PEP) through direct phosphoryl transfer between the nucleoside triphosphate and OAA. In Rhizobium rhizogenes (strain K84 / ATCC BAA-868) (Agrobacterium radiobacter), this protein is Phosphoenolpyruvate carboxykinase (ATP).